The chain runs to 424 residues: CinA-like protein (424 aa).

This sequence belongs to the CinA family.

The protein is CinA-like protein of Syntrophobacter fumaroxidans (strain DSM 10017 / MPOB).